The sequence spans 208 residues: Proheparin-binding EGF-like growth factor (208 aa).

The signal sequence occupies residues 1–23; that stretch reads MKLLPSVVLKLFLAAVFSALVTG. The propeptide occupies 24 to 62; sequence ESLERLRRGLADGTSNLVSPTESTDQLLPPGGGRGREVL. Residues 24–161 lie on the Extracellular side of the membrane; that stretch reads ESLERLRRGL…NRLYTYDHTT (138 aa). Residues 37-49 show a composition bias toward polar residues; the sequence is TSNLVSPTESTDQ. 2 disordered regions span residues 37-57 and 81-104; these read TSNL…GGGR and QALA…LGKK. A glycan (O-linked (GalNAc...) threonine) is linked at Thr-85. A compositionally biased stretch (basic residues) spans 93-102; the sequence is KRKKKGKGLG. One can recognise an EGF-like domain in the interval 104–144; the sequence is KRDPCLRKYKDFCIHGECKYVKELRAPSCICHPGYHGERCH. 3 cysteine pairs are disulfide-bonded: Cys-108-Cys-121, Cys-116-Cys-132, and Cys-134-Cys-143. The propeptide at 149-208 is C-terminal; sequence PVKNRLYTYDHTTILAVVAVVLSSVCLLVIVGLLMFRYHRRGGYDVENEEKVKLGVTASH. The chain crosses the membrane as a helical span at residues 162–182; the sequence is ILAVVAVVLSSVCLLVIVGLL. Over 183–208 the chain is Cytoplasmic; it reads MFRYHRRGGYDVENEEKVKLGVTASH.

In terms of assembly, interacts with FBLN1. Interacts with EGFR and ERBB4. O-glycosylated. In terms of tissue distribution, macrophages, midbrain, cerebellum, hypothalamus, cerebral cortex, bulbourethral gland, lung, heart ventricle, kidney, skin, prostate, seminal vesicle, testis; at low levels in lymph node, thymus, spleen; not detected in pituitary, olfactory bulb, thyroid, duodenum, pancreas, liver, submaxillary gland.

The protein localises to the secreted. It is found in the extracellular space. Its subcellular location is the cell membrane. In terms of biological role, growth factor that mediates its effects via EGFR, ERBB2 and ERBB4. Required for normal cardiac valve formation and normal heart function. Promotes smooth muscle cell proliferation. May be involved in macrophage-mediated cellular proliferation. It is mitogenic for fibroblasts, but not endothelial cells. It is able to bind EGF receptor/EGFR with higher affinity than EGF itself and is a far more potent mitogen for smooth muscle cells than EGF. Also acts as a diphtheria toxin receptor. This is Proheparin-binding EGF-like growth factor (HBEGF) from Sus scrofa (Pig).